The sequence spans 180 residues: Inner membrane-spanning protein YciB (180 aa).

6 consecutive transmembrane segments (helical) span residues 4-24, 25-45, 49-69, 76-96, 118-138, and 150-170; these read LLSEIGPVIAFFAGFFYGGGI, QHATLYMLITSVICITLCYVI, VSKLSIISTTVLLVSGSITLI, IKIKPTILYVIFGIIFLMSGI, ITLSYRTAAFFFFMAVVNEVV, and FKVFGVIPITFIFILLQLPLL.

This sequence belongs to the YciB family.

The protein resides in the cell inner membrane. Its function is as follows. Plays a role in cell envelope biogenesis, maintenance of cell envelope integrity and membrane homeostasis. This Rickettsia africae (strain ESF-5) protein is Inner membrane-spanning protein YciB.